Here is a 176-residue protein sequence, read N- to C-terminus: Probable fimbrial subunit LpfE (176 aa).

Residues 1 to 23 (MKFKRLLHSGIASLSLVACGVNA) form the signal peptide.

Belongs to the fimbrial protein family.

It localises to the fimbrium. Part of the lpfABCC'DE fimbrial operon. LP fimbriae may participate in the interaction with eukaryotic cells by assisting in microcolony formation. The polypeptide is Probable fimbrial subunit LpfE (lpfE) (Escherichia coli O157:H7).